Here is an 869-residue protein sequence, read N- to C-terminus: MRVLSAIALVASLASSALSAPASESRVSTQLRSRDAEGYSSPPYYPAPNGGWLSSWADAYEKAQRVVRDMTLAEKVNLTTGTGIFMGPCVGQTGSALRFGIPNLCLQDSPLGVRNSDHNTAFPAGITVGATFDKDLMYARGVELGKEFRGKGINVLLGPSVGPIGRKPRGGRNWEGFGADPSLQAIGGAQTIKGIQSQGVIATIKHYIGNEQEMYRMSNVGQRAYSSNIDDRTLHEVYLWPFAEGIRAGVGAVMTAYNEVNSSACSQNSKLLNEILKDELGFQGFVMTDWLGQYGGVSSALAGLDMAMPGDGAIPLLGTAYWGSELSRSILNGSVPVSRLNDMVTRIVAAWYKMGQDGDFPLPNFSSNTQDATGPLYPGALFSPSGVVNQYVNVQADHNITARAIARDAITLLKNDDNILPLKKDDALKVFGTDAGPNPDGLNSCADMGCNKGVLTMGWGSGTSRLPYLVTPQEAIANISSNAAFFITDKFPSNVAVSSGDVAVVFISADSGENYITVEGNPGDRTSAGLNAWHNGDKLVKDAAAKFSKVVVVVHTVGPILMEEWIDLPSVKAVLVAHLPGQEAGWSLTDVLFGDYSPSGHLPYTIPRAESDYPSSVGLLSQPIVQIQDTYTEGLYIDYRHFLKANITPRYPFGHGLSYTTFSFSQPTLSVRTALDSTYPPTRPPKGPTPTYPTAIPDPSEVAWPKNFDRIWRYLYPYLDDPASAAKNSSKTYPYPAGYTTVPKPAPRAGGAEGGNPALFDVAFAVSVTVTNTGSRPGRAVAQLYVELPDSLGETPSRQLRQFAKTKTLAPGTSETLTMEITRKDISVWDVVVQDWKAPVRGEGVKIWLGESVLDMRAVCEVGGACRVI.

Positions 1–19 (MRVLSAIALVASLASSALS) are cleaved as a signal peptide. Residues N77 and N261 are each glycosylated (N-linked (GlcNAc...) asparagine). D289 is a catalytic residue. N332, N364, N399, and N478 each carry an N-linked (GlcNAc...) asparagine glycan. A disordered region spans residues 677 to 697 (STYPPTRPPKGPTPTYPTAIP). Over residues 681-691 (PTRPPKGPTPT) the composition is skewed to pro residues. N-linked (GlcNAc...) asparagine glycosylation is present at N728.

Belongs to the glycosyl hydrolase 3 family.

It localises to the secreted. The enzyme catalyses Hydrolysis of terminal, non-reducing beta-D-glucosyl residues with release of beta-D-glucose.. The protein operates within glycan metabolism; cellulose degradation. Beta-glucosidases are one of a number of cellulolytic enzymes involved in the degradation of cellulosic biomass. Catalyzes the last step releasing glucose from the inhibitory cellobiose. The protein is Probable beta-glucosidase F (bglF) of Aspergillus fumigatus (strain CBS 144.89 / FGSC A1163 / CEA10) (Neosartorya fumigata).